The chain runs to 130 residues: Small ribosomal subunit protein uS8 (130 aa).

The protein belongs to the universal ribosomal protein uS8 family. As to quaternary structure, part of the 30S ribosomal subunit. Contacts proteins S5 and S12.

In terms of biological role, one of the primary rRNA binding proteins, it binds directly to 16S rRNA central domain where it helps coordinate assembly of the platform of the 30S subunit. This chain is Small ribosomal subunit protein uS8, found in Teredinibacter turnerae (strain ATCC 39867 / T7901).